The primary structure comprises 883 residues: Alanine--tRNA ligase (883 aa).

Zn(2+)-binding residues include His-560, His-564, Cys-665, and His-669.

The protein belongs to the class-II aminoacyl-tRNA synthetase family. Zn(2+) serves as cofactor.

It is found in the cytoplasm. It catalyses the reaction tRNA(Ala) + L-alanine + ATP = L-alanyl-tRNA(Ala) + AMP + diphosphate. Its function is as follows. Catalyzes the attachment of alanine to tRNA(Ala) in a two-step reaction: alanine is first activated by ATP to form Ala-AMP and then transferred to the acceptor end of tRNA(Ala). Also edits incorrectly charged Ser-tRNA(Ala) and Gly-tRNA(Ala) via its editing domain. This is Alanine--tRNA ligase from Mesomycoplasma hyopneumoniae (strain 232) (Mycoplasma hyopneumoniae).